Here is a 209-residue protein sequence, read N- to C-terminus: Floral homeotic protein GLOBOSA (209 aa).

The MADS-box domain occupies 3 to 57; that stretch reads RGKIEIKRIENSSNRQVTYSKRRNGILKKAKEISVLCDARVSVIIFASSGKMHEF. Positions 82–173 constitute a K-box domain; sequence HENLDNEINK…QLEIASMNRN (92 aa).

In terms of tissue distribution, expressed mainly in floral organs and, within the flower, expression is restricted to petals and stamens.

The protein localises to the nucleus. Transcription factor involved in the genetic control of flower development. Acts in conjunction with DEFICIENS (defA). This chain is Floral homeotic protein GLOBOSA (GLO), found in Nicotiana tabacum (Common tobacco).